Consider the following 105-residue polypeptide: MTANRLTLSGTVCKAPMRKVSPSGIPHCQFVLEHRSQQVEAGFNRQVWCRMPVIISGKAHQAITQSITVGTQLTVQGFICSHQGRNGLNKMVLHAEQIELIDSGD.

The region spanning 1–102 (MTANRLTLSG…LHAEQIELID (102 aa)) is the SSB domain.

This sequence belongs to the PriB family. As to quaternary structure, homodimer. Interacts with PriA and DnaT. Component of the replication restart primosome. Primosome assembly occurs via a 'hand-off' mechanism. PriA binds to replication forks, subsequently PriB then DnaT bind; DnaT then displaces ssDNA to generate the helicase loading substrate.

Involved in the restart of stalled replication forks, which reloads the replicative helicase on sites other than the origin of replication; the PriA-PriB pathway is the major replication restart pathway. During primosome assembly it facilitates complex formation between PriA and DnaT on DNA; stabilizes PriA on DNA. Stimulates the DNA unwinding activity of PriA helicase. The protein is Replication restart protein PriB of Erwinia tasmaniensis (strain DSM 17950 / CFBP 7177 / CIP 109463 / NCPPB 4357 / Et1/99).